Consider the following 72-residue polypeptide: MAKDDVIEVEGTVTDTLPNAMFKVELENGHTVLAHVSGKIRMHFIRILPGDKVTVELSPYDLTRGRITYRYK.

In terms of domain architecture, S1-like spans 1-72 (MAKDDVIEVE…TRGRITYRYK (72 aa)). Tyr60 carries the phosphotyrosine modification.

This sequence belongs to the IF-1 family. As to quaternary structure, component of the 30S ribosomal translation pre-initiation complex which assembles on the 30S ribosome in the order IF-2 and IF-3, IF-1 and N-formylmethionyl-tRNA(fMet); mRNA recruitment can occur at any time during PIC assembly.

The protein localises to the cytoplasm. One of the essential components for the initiation of protein synthesis. Stabilizes the binding of IF-2 and IF-3 on the 30S subunit to which N-formylmethionyl-tRNA(fMet) subsequently binds. Helps modulate mRNA selection, yielding the 30S pre-initiation complex (PIC). Upon addition of the 50S ribosomal subunit IF-1, IF-2 and IF-3 are released leaving the mature 70S translation initiation complex. The protein is Translation initiation factor IF-1 of Oceanobacillus iheyensis (strain DSM 14371 / CIP 107618 / JCM 11309 / KCTC 3954 / HTE831).